The primary structure comprises 230 residues: Cytidylate kinase (230 aa).

Residue glycine 13–serine 21 participates in ATP binding.

It belongs to the cytidylate kinase family. Type 1 subfamily.

It localises to the cytoplasm. It carries out the reaction CMP + ATP = CDP + ADP. It catalyses the reaction dCMP + ATP = dCDP + ADP. In Mycobacterium tuberculosis (strain ATCC 25177 / H37Ra), this protein is Cytidylate kinase.